Here is a 370-residue protein sequence, read N- to C-terminus: MDLLKSPLYSKYIESNAKLINFAGWEMPISFSGLINEHESVRTSAGFFDISHMGVISLRGINPKEYIQKFFPTNLYSFSEGQGLYTLILNEKGGIIDDLIIYDLGRQEGDISEIFLIVNASRYQDDFLWIKNNLNTNQVSVSNAKTDKVLLSIQGRNSFTLFEEWIGSSISHIPYFGCEYKNFDHISTEGKFFFSKTGYTGENGLEILLPAQSAINLWDFLVSRNIQPCGLGARDTLRLEAGMHLYGQDLDEKTTPYEAGLGWLVNLENNHEFFGRDFLEKQSKLGIKKKLVGLTIEGRAIGRKGCEVFKDEKYIGIITSGTWSPTTEKAIAFAYIQNSYAALNNVVEVLIRGKKFKATITKRAFYKKDI.

It belongs to the GcvT family. In terms of assembly, the glycine cleavage system is composed of four proteins: P, T, L and H.

It carries out the reaction N(6)-[(R)-S(8)-aminomethyldihydrolipoyl]-L-lysyl-[protein] + (6S)-5,6,7,8-tetrahydrofolate = N(6)-[(R)-dihydrolipoyl]-L-lysyl-[protein] + (6R)-5,10-methylene-5,6,7,8-tetrahydrofolate + NH4(+). Its function is as follows. The glycine cleavage system catalyzes the degradation of glycine. This Prochlorococcus marinus (strain MIT 9515) protein is Aminomethyltransferase.